The sequence spans 213 residues: Orotate phosphoribosyltransferase (213 aa).

A 5-phospho-alpha-D-ribose 1-diphosphate-binding site is contributed by lysine 26. 34–35 (FF) is a binding site for orotate. 5-phospho-alpha-D-ribose 1-diphosphate contacts are provided by residues 72–73 (YK), arginine 99, lysine 100, lysine 103, histidine 105, and 124–132 (DDVITAGTA). Residues threonine 128 and arginine 156 each contribute to the orotate site.

This sequence belongs to the purine/pyrimidine phosphoribosyltransferase family. PyrE subfamily. In terms of assembly, homodimer. Mg(2+) serves as cofactor.

It carries out the reaction orotidine 5'-phosphate + diphosphate = orotate + 5-phospho-alpha-D-ribose 1-diphosphate. It participates in pyrimidine metabolism; UMP biosynthesis via de novo pathway; UMP from orotate: step 1/2. Its function is as follows. Catalyzes the transfer of a ribosyl phosphate group from 5-phosphoribose 1-diphosphate to orotate, leading to the formation of orotidine monophosphate (OMP). This chain is Orotate phosphoribosyltransferase, found in Haemophilus ducreyi (strain 35000HP / ATCC 700724).